A 71-amino-acid polypeptide reads, in one-letter code: UPF0346 protein MGAS2096_Spy0401 (71 aa).

The protein belongs to the UPF0346 family.

In Streptococcus pyogenes serotype M12 (strain MGAS2096), this protein is UPF0346 protein MGAS2096_Spy0401.